A 280-amino-acid polypeptide reads, in one-letter code: MSTLQYPGPPPPSSMNLHNPHMNHHHGLVGPGLAPLSAPNGIQSLNTLHNGSGPPSHTPFYIDNILGSRLNMTGPARPTPTLPSPTFPAHMNSAYNSYYEQAVHPGLAAPTPISYGSGAFSSPPPYPFARGDYPHGLIDRHDPYSKVPGKPFLWNPFIQRPLHKRKGGQVRFSNDQTMELEKKFESQKYLSPPERKKLAKLLQLSERQVKTWFQNRRAKWRRVKQEVPTGKGEGDENSHEKPRDLDRDDFSREQVLSNGAACAFTHGGGSEADSLEEKEA.

Disordered stretches follow at residues methionine 1–proline 35 and arginine 221–alanine 280. The homeobox DNA-binding region spans arginine 165–lysine 224. The segment covering glycine 232–arginine 252 has biased composition (basic and acidic residues).

It localises to the nucleus. Functionally, transcription factor that may play a central role in activating or maintaining gene expression in the vegetal pole. Part of a gene regulatory circuit with Erg and Tgif that operates early in mesoderm development. In Patiria miniata (Bat star), this protein is Hematopoietically-expressed homeobox protein HHEX homolog.